The sequence spans 191 residues: Calcium-binding protein L (191 aa).

Gly2 carries the N-myristoyl glycine lipid modification. EF-hand domains lie at 25–59, 60–95, and 96–131; these read EQVSQILKDYQSVNQDSKGLSLEEFKSFFSIRFKD, YDDASILHMFKIFDSDKNGRISFKEFVGALFIITKS, and PVSDKLSFLFDMFDRDLNGYLDLEESYNILKLALNT. 5 residues coordinate Ca(2+): Asp73, Asp75, Asn77, Arg79, and Glu84.

Belongs to the recoverin family.

This chain is Calcium-binding protein L (cbpL), found in Dictyostelium discoideum (Social amoeba).